We begin with the raw amino-acid sequence, 116 residues long: MAFSFLNKLLIIFIFIFISLSSSSPTISLVQQLSPEIAPLLPSPGDALPSDDGSGTIPSSPSPPDPDTNDGSYPDPLAFSPFASPPVSSPSPPPSLPSAGVLLISLIISSASFLAL.

A signal peptide spans 1 to 28; the sequence is MAFSFLNKLLIIFIFIFISLSSSSPTIS. The interval 40–95 is disordered; that stretch reads LLPSPGDALPSDDGSGTIPSSPSPPDPDTNDGSYPDPLAFSPFASPPVSSPSPPPS. Low complexity-rich tracts occupy residues 50 to 59 and 69 to 82; these read SDDGSGTIPS and NDGSYPDPLAFSPF. Residues 83-95 are compositionally biased toward pro residues; the sequence is ASPPVSSPSPPPS. Serine 89 is lipidated: GPI-anchor amidated serine. Residues 90–116 constitute a propeptide, removed in mature form; sequence PSPPPSLPSAGVLLISLIISSASFLAL.

This sequence belongs to the classical AGP family. O-glycosylated on the hydroxyproline residues.

The protein localises to the cell membrane. Its function is as follows. Proteoglycan that seems to be implicated in diverse developmental roles such as differentiation, cell-cell recognition, embryogenesis and programmed cell death. This is Classical arabinogalactan protein 25 (AGP25) from Arabidopsis thaliana (Mouse-ear cress).